The primary structure comprises 299 residues: MAGSLSSAIFNVLKYSGMASLAVTLIALGFLYKYQKTLVYPSAFPQGSRENVPTPKEFNMEYERIELRTRDKVTLDSYLMLQSESPESRPTLLYFHANAGNMGHRLPIARVFYSALNMNVFIISYRGYGKSTGSPSEAGLKIDSQTALEYLMEHPICSKTKIVVYGQSIGGAVAIALTAKNQDRISALILENTFTSIKDMIPTVFPYGGSIISRFCTEIWSSQDEIRKIKKLPVLFLSGEKDEIVPPPQMVLLFGLCGSAKKKFHSFPKCTHNDTCLGDGYFQVIADFLAENDINTPAS.

Residues 15 to 32 (YSGMASLAVTLIALGFLY) traverse the membrane as a helical segment.

Belongs to the serine esterase family.

It is found in the membrane. In terms of biological role, suppressor of bem1/bud5. This chain is Protein bem46 (bem46), found in Schizosaccharomyces pombe (strain 972 / ATCC 24843) (Fission yeast).